The following is a 137-amino-acid chain: Dormancy-associated protein homolog 3 (137 aa).

Disordered stretches follow at residues 1 to 55 (MGLL…DSLP) and 69 to 137 (KPPG…TYGM). Residues 32–43 (FRPSSGNDQSEA) are compositionally biased toward polar residues. The span at 70 to 87 (PPGYQGSSAPASPAGSTP) shows a compositional bias: low complexity. Ser81 is subject to Phosphoserine. Pro residues predominate over residues 88-97 (PLSPFSPPLS). Residues 104–118 (EPFRFRRRSTSDAFE) show a composition bias toward basic and acidic residues. Residues 127 to 137 (GPRSSPPTYGM) are compositionally biased toward polar residues.

The protein belongs to the DRM1/ARP family.

In Arabidopsis thaliana (Mouse-ear cress), this protein is Dormancy-associated protein homolog 3.